Consider the following 346-residue polypeptide: UDP-3-O-acylglucosamine N-acyltransferase (346 aa).

His253 functions as the Proton acceptor in the catalytic mechanism.

Belongs to the transferase hexapeptide repeat family. LpxD subfamily. As to quaternary structure, homotrimer.

The catalysed reaction is a UDP-3-O-[(3R)-3-hydroxyacyl]-alpha-D-glucosamine + a (3R)-hydroxyacyl-[ACP] = a UDP-2-N,3-O-bis[(3R)-3-hydroxyacyl]-alpha-D-glucosamine + holo-[ACP] + H(+). It functions in the pathway bacterial outer membrane biogenesis; LPS lipid A biosynthesis. In terms of biological role, catalyzes the N-acylation of UDP-3-O-acylglucosamine using 3-hydroxyacyl-ACP as the acyl donor. Is involved in the biosynthesis of lipid A, a phosphorylated glycolipid that anchors the lipopolysaccharide to the outer membrane of the cell. In Rickettsia prowazekii (strain Madrid E), this protein is UDP-3-O-acylglucosamine N-acyltransferase.